A 582-amino-acid chain; its full sequence is DNA polymerase IV (582 aa).

Positions 127 to 161 are disordered; it reads NADDGQSSTDKESEISTDVESERNDDSNNKDMIQA. Over residues 135 to 155 the composition is skewed to basic and acidic residues; it reads TDKESEISTDVESERNDDSNN. An involved in ssDNA binding region spans residues 360 to 369; it reads RGYSKCGDID. Residues D367, D369, and D502 each contribute to the Mg(2+) site.

Belongs to the DNA polymerase type-X family. In terms of assembly, interacts with DNL4 subunit of the DNL4-LIF1 complex. The cofactor is Mg(2+).

Its subcellular location is the nucleus. The enzyme catalyses DNA(n) + a 2'-deoxyribonucleoside 5'-triphosphate = DNA(n+1) + diphosphate. With respect to regulation, stimulated by the interaction with the DNL4-LIF1 complex. Its function is as follows. Repair polymerase. Involved in gap-filling in DNA nonhomologous end joining (NHEJ) required for double-strand break repair. Seems to conduct DNA synthesis in a stepwise distributive fashion rather than in a processive fashion as for other DNA polymerases. Preferentially acts upon short gaps formed by the alignment of linear duplexes with complementary single-strand ends. Required for filling gaps that need removal of a 5'- or 3'-terminal mismatch, however lacks nuclease activities. The chain is DNA polymerase IV (POL4) from Saccharomyces cerevisiae (strain ATCC 204508 / S288c) (Baker's yeast).